The primary structure comprises 176 residues: MEKRLERAMFAGGCFWCMVQPFDKQPGIESVVSGYAGGTVENPTYEQVKTGTTGHYEVVHITYVPELFPFEKLLSLYWPQIDPTDPDGQFHDRGPQYRTAIFYENEEQRALAERSREALEKSGKFKKPIVTSILPMATFYPAEEEHQQFYKKNPMAYKEDREKSGRDEFIYKHWGK.

Residue cysteine 14 is part of the active site.

This sequence belongs to the MsrA Met sulfoxide reductase family.

It carries out the reaction L-methionyl-[protein] + [thioredoxin]-disulfide + H2O = L-methionyl-(S)-S-oxide-[protein] + [thioredoxin]-dithiol. The catalysed reaction is [thioredoxin]-disulfide + L-methionine + H2O = L-methionine (S)-S-oxide + [thioredoxin]-dithiol. In terms of biological role, has an important function as a repair enzyme for proteins that have been inactivated by oxidation. Catalyzes the reversible oxidation-reduction of methionine sulfoxide in proteins to methionine. This chain is Peptide methionine sulfoxide reductase MsrA, found in Halalkalibacterium halodurans (strain ATCC BAA-125 / DSM 18197 / FERM 7344 / JCM 9153 / C-125) (Bacillus halodurans).